We begin with the raw amino-acid sequence, 303 residues long: Sulfate adenylyltransferase subunit 2 (303 aa).

Positions 281-303 (RQGRVIDHDSSGSMEKKKQEGYF) are disordered.

The protein belongs to the PAPS reductase family. CysD subfamily. Heterodimer composed of CysD, the smaller subunit, and CysN.

The enzyme catalyses sulfate + ATP + H(+) = adenosine 5'-phosphosulfate + diphosphate. Its pathway is sulfur metabolism; hydrogen sulfide biosynthesis; sulfite from sulfate: step 1/3. In terms of biological role, with CysN forms the ATP sulfurylase (ATPS) that catalyzes the adenylation of sulfate producing adenosine 5'-phosphosulfate (APS) and diphosphate, the first enzymatic step in sulfur assimilation pathway. APS synthesis involves the formation of a high-energy phosphoric-sulfuric acid anhydride bond driven by GTP hydrolysis by CysN coupled to ATP hydrolysis by CysD. This Saccharophagus degradans (strain 2-40 / ATCC 43961 / DSM 17024) protein is Sulfate adenylyltransferase subunit 2.